A 125-amino-acid chain; its full sequence is MPEPAKSRPAPKKGSKKAVTKAQKKDGKERKRSRKESYSVYVYKVLKQVHPDTGISSKAMGIMNSFVNDIFERIAGERRLAHYNKRSTITSREIQTAVRLLLPGELAKHAVSEGTKAVTKYTSSK.

Residues 1-36 (MPEPAKSRPAPKKGSKKAVTKAQKKDGKERKRSRKE) are disordered. An N-acetylproline modification is found at Pro-2. Residue Glu-3 is modified to ADP-ribosyl glutamic acid. Lys-6 carries the post-translational modification N6-(2-hydroxyisobutyryl)lysine; alternate. Position 6 is an N6-(beta-hydroxybutyryl)lysine; alternate (Lys-6). Lys-6 carries the post-translational modification N6-acetyllysine; alternate. Lys-6 is modified (N6-butyryllysine; alternate). At Lys-6 the chain carries N6-crotonyllysine; alternate. Lys-6 is subject to N6-lactoyllysine; alternate. Lys-6 participates in a covalent cross-link: Glycyl lysine isopeptide (Lys-Gly) (interchain with G-Cter in SUMO2); alternate. Ser-7 carries the ADP-ribosylserine modification. Positions 9–19 (PAPKKGSKKAV) are enriched in basic residues. The residue at position 12 (Lys-12) is an N6-(beta-hydroxybutyryl)lysine; alternate. N6-acetyllysine; alternate is present on residues Lys-12 and Lys-13. An N6-crotonyllysine; alternate mark is found at Lys-12 and Lys-13. Lys-12 carries the N6-lactoyllysine; alternate modification. Lys-13 is modified (N6-(2-hydroxyisobutyryl)lysine; alternate). Residue Ser-15 is modified to Phosphoserine; by STK4/MST1. Residues Lys-16, Lys-17, Lys-21, and Lys-24 each carry the N6-acetyllysine; alternate modification. 4 positions are modified to N6-crotonyllysine; alternate: Lys-16, Lys-17, Lys-21, and Lys-24. Residues Lys-16, Lys-17, Lys-21, and Lys-24 each carry the N6-lactoyllysine; alternate modification. Lys-17 bears the N6-glutaryllysine; alternate mark. Lys-21 and Lys-24 each carry N6-(2-hydroxyisobutyryl)lysine; alternate. Lys-21 carries the post-translational modification N6-(beta-hydroxybutyryl)lysine; alternate. Lys-21 is subject to N6-butyryllysine; alternate. A Glycyl lysine isopeptide (Lys-Gly) (interchain with G-Cter in SUMO2); alternate cross-link involves residue Lys-21. Position 25 is an N6-(2-hydroxyisobutyryl)lysine (Lys-25). Residue Lys-35 is modified to N6-(2-hydroxyisobutyryl)lysine; alternate. Lys-35 bears the N6-(beta-hydroxybutyryl)lysine; alternate mark. An N6-crotonyllysine; alternate modification is found at Lys-35. Lys-35 bears the N6-glutaryllysine; alternate mark. Lys-35 is subject to N6-succinyllysine; alternate. Lys-35 is covalently cross-linked (Glycyl lysine isopeptide (Lys-Gly) (interchain with G-Cter in ubiquitin); alternate). Glu-36 is modified (polyADP-ribosyl glutamic acid). The residue at position 37 (Ser-37) is a Phosphoserine; by AMPK. Lys-44, Lys-47, and Lys-58 each carry N6-(2-hydroxyisobutyryl)lysine; alternate. Lys-44 carries the N6-lactoyllysine; alternate modification. Lys-44 and Lys-47 each carry N6-glutaryllysine; alternate. At Lys-47 the chain carries N6-methyllysine; alternate. The residue at position 58 (Lys-58) is an N6,N6-dimethyllysine; alternate. A Dimethylated arginine modification is found at Arg-79. Lys-85 is modified (N6-(2-hydroxyisobutyryl)lysine; alternate). Lys-85 is modified (N6-acetyllysine; alternate). Lys-85 bears the N6-lactoyllysine; alternate mark. The residue at position 85 (Lys-85) is an N6,N6,N6-trimethyllysine; alternate. Omega-N-methylarginine is present on residues Arg-86 and Arg-92. Lys-108 carries the post-translational modification N6-(2-hydroxyisobutyryl)lysine; alternate. Lys-108 carries the N6-lactoyllysine; alternate modification. Residue Lys-108 is modified to N6-glutaryllysine; alternate. An N6-methyllysine; alternate modification is found at Lys-108. Ser-112 carries O-linked (GlcNAc) serine glycosylation. The residue at position 115 (Thr-115) is a Phosphothreonine. An N6-(2-hydroxyisobutyryl)lysine; alternate mark is found at Lys-116 and Lys-120. Residue Lys-116 is modified to N6-(beta-hydroxybutyryl)lysine; alternate. Lys-116 and Lys-120 each carry N6-lactoyllysine; alternate. Residues Lys-116 and Lys-120 each carry the N6-glutaryllysine; alternate modification. Lys-116 and Lys-120 each carry N6-succinyllysine; alternate. Lys-116 is modified (N6-methylated lysine; alternate). Lys-120 is covalently cross-linked (Glycyl lysine isopeptide (Lys-Gly) (interchain with G-Cter in ubiquitin); alternate).

It belongs to the histone H2B family. In terms of assembly, the nucleosome is a histone octamer containing two molecules each of H2A, H2B, H3 and H4 assembled in one H3-H4 heterotetramer and two H2A-H2B heterodimers. The octamer wraps approximately 147 bp of DNA. In terms of processing, monoubiquitination at Lys-35 (H2BK34Ub) by the MSL1/MSL2 dimer is required for histone H3 'Lys-4' (H3K4me) and 'Lys-79' (H3K79me) methylation and transcription activation at specific gene loci, such as HOXA9 and MEIS1 loci. Similarly, monoubiquitination at Lys-120 (H2BK120Ub) by the RNF20/40 complex gives a specific tag for epigenetic transcriptional activation and is also prerequisite for histone H3 'Lys-4' and 'Lys-79' methylation. It also functions cooperatively with the FACT dimer to stimulate elongation by RNA polymerase II. H2BK120Ub also acts as a regulator of mRNA splicing: deubiquitination by USP49 is required for efficient cotranscriptional splicing of a large set of exons. Phosphorylated on Ser-15 (H2BS14ph) by STK4/MST1 during apoptosis; which facilitates apoptotic chromatin condensation. Also phosphorylated on Ser-15 in response to DNA double strand breaks (DSBs), and in correlation with somatic hypermutation and immunoglobulin class-switch recombination. Phosphorylation at Ser-37 (H2BS36ph) by AMPK in response to stress promotes transcription. Post-translationally, ADP-ribosylated by PARP1 or PARP2 on Ser-7 (H2BS6ADPr) in response to DNA damage. H2BS6ADPr promotes recruitment of CHD1L. Mono-ADP-ribosylated on Glu-3 (H2BE2ADPr) by PARP3 in response to single-strand breaks. Poly ADP-ribosylation on Glu-36 (H2BE35ADPr) by PARP1 regulates adipogenesis: it inhibits phosphorylation at Ser-37 (H2BS36ph), thereby blocking expression of pro-adipogenetic genes. In terms of processing, crotonylation (Kcr) is specifically present in male germ cells and marks testis-specific genes in post-meiotic cells, including X-linked genes that escape sex chromosome inactivation in haploid cells. Crotonylation marks active promoters and enhancers and confers resistance to transcriptional repressors. It is also associated with post-meiotically activated genes on autosomes. GlcNAcylation at Ser-112 promotes monoubiquitination of Lys-120. It fluctuates in response to extracellular glucose, and associates with transcribed genes. Post-translationally, lactylated in macrophages by EP300/P300 by using lactoyl-CoA directly derived from endogenous or exogenous lactate, leading to stimulates gene transcription.

The protein resides in the nucleus. It is found in the chromosome. Its function is as follows. Core component of nucleosome. Nucleosomes wrap and compact DNA into chromatin, limiting DNA accessibility to the cellular machineries which require DNA as a template. Histones thereby play a central role in transcription regulation, DNA repair, DNA replication and chromosomal stability. DNA accessibility is regulated via a complex set of post-translational modifications of histones, also called histone code, and nucleosome remodeling. In terms of biological role, has broad antibacterial activity. May contribute to the formation of the functional antimicrobial barrier of the colonic epithelium, and to the bactericidal activity of amniotic fluid. This is Histone H2B type 1 from Rattus norvegicus (Rat).